We begin with the raw amino-acid sequence, 688 residues long: Two-component response regulator ORR23 (688 aa).

The Response regulatory domain maps to arginine 25–isoleucine 140. A 4-aspartylphosphate modification is found at aspartate 76. Positions proline 161–proline 212 are disordered. Over residues serine 193 to aspartate 208 the composition is skewed to acidic residues. The segment at residues alanine 211–lysine 270 is a DNA-binding region (myb-like GARP).

Belongs to the ARR family. Type-B subfamily. Post-translationally, two-component system major event consists of a His-to-Asp phosphorelay between a sensor histidine kinase (HK) and a response regulator (RR). In plants, the His-to-Asp phosphorelay involves an additional intermediate named Histidine-containing phosphotransfer protein (HPt). This multistep phosphorelay consists of a His-Asp-His-Asp sequential transfer of a phosphate group between first a His and an Asp of the HK protein, followed by the transfer to a conserved His of the HPt protein and finally the transfer to an Asp in the receiver domain of the RR protein.

It localises to the nucleus. In terms of biological role, transcriptional activator that binds specific DNA sequence. Functions as a response regulator involved in His-to-Asp phosphorelay signal transduction system. Phosphorylation of the Asp residue in the receiver domain activates the ability of the protein to promote the transcription of target genes. May directly activate some type-A response regulators in response to cytokinins. The sequence is that of Two-component response regulator ORR23 from Oryza sativa subsp. indica (Rice).